The primary structure comprises 266 residues: Putative carbamate hydrolase RutD (266 aa).

Belongs to the AB hydrolase superfamily. Hydrolase RutD family.

The catalysed reaction is carbamate + 2 H(+) = NH4(+) + CO2. Involved in pyrimidine catabolism. May facilitate the hydrolysis of carbamate, a reaction that can also occur spontaneously. In Escherichia coli O127:H6 (strain E2348/69 / EPEC), this protein is Putative carbamate hydrolase RutD.